Reading from the N-terminus, the 201-residue chain is 3-isopropylmalate dehydratase small subunit (201 aa).

Belongs to the LeuD family. LeuD type 1 subfamily. In terms of assembly, heterodimer of LeuC and LeuD.

The catalysed reaction is (2R,3S)-3-isopropylmalate = (2S)-2-isopropylmalate. Its pathway is amino-acid biosynthesis; L-leucine biosynthesis; L-leucine from 3-methyl-2-oxobutanoate: step 2/4. Its function is as follows. Catalyzes the isomerization between 2-isopropylmalate and 3-isopropylmalate, via the formation of 2-isopropylmaleate. The sequence is that of 3-isopropylmalate dehydratase small subunit from Nitrobacter winogradskyi (strain ATCC 25391 / DSM 10237 / CIP 104748 / NCIMB 11846 / Nb-255).